Consider the following 470-residue polypeptide: MNPNQKIITIGSICMAIGIISLILQMGNIISIWVSHSIQTGSQNHTGICNQRIITYENSTWVNQTYVNINNTNVVAGKDTTSVTLAGNSSLCPIRGWAIYSKDNSIRIGSKGDVFVIREPFISCSHLECRTFFLTQGALLNDKHSNGTVKDRSPYRALMSCPIGEAPSPYNSRFESVAWSASACHDGMGWLTIGISGPDDGAVAVLKYNGIITETIKSWRKRILRTQESECVCVNGSCFTIMTDGPSNGPASYRIFKIEKGKITKSIELDAPNSHYEECSCYPDTGTVMCVCRDNWHGSNRPWVSFNQNLDYQIGYICSGVFGDNPRPKDGKGSCDPVTVDGADGVKGFSYRYGNGVWIGRTKSNSSRKGFEMIWDPNGWTDTDSNFLVKQDVVAMTDWSGYSGSFVQHPELTGLDCMRPCFWVELIRGRPREKTTIWTSGSSISFCGVNSDTANWSWPDGAELPFTIDK.

The Intravirion portion of the chain corresponds to 1–6 (MNPNQK). A helical transmembrane segment spans residues 7–27 (IITIGSICMAIGIISLILQMG). The involved in apical transport and lipid raft association stretch occupies residues 11–33 (GSICMAIGIISLILQMGNIISIW). Residues 28 to 470 (NIISIWVSHS…GAELPFTIDK (443 aa)) lie on the Virion surface side of the membrane. The segment at 36–90 (HSIQTGSQNHTGICNQRIITYENSTWVNQTYVNINNTNVVAGKDTTSVTLAGNSS) is hypervariable stalk region. Residues asparagine 44, asparagine 58, asparagine 63, asparagine 70, and asparagine 88 are each glycosylated (N-linked (GlcNAc...) asparagine; by host). The interval 91–470 (LCPIRGWAIY…GAELPFTIDK (380 aa)) is head of neuraminidase. Cystine bridges form between cysteine 92-cysteine 417, cysteine 124-cysteine 129, cysteine 184-cysteine 231, cysteine 233-cysteine 238, cysteine 279-cysteine 292, cysteine 281-cysteine 290, cysteine 318-cysteine 335, and cysteine 421-cysteine 447. A substrate-binding site is contributed by arginine 118. Asparagine 146 carries N-linked (GlcNAc...) asparagine; by host glycosylation. Aspartate 151 acts as the Proton donor/acceptor in catalysis. Arginine 152 is a binding site for substrate. The N-linked (GlcNAc...) asparagine; by host glycan is linked to asparagine 235. Residue 277 to 278 (EE) coordinates substrate. Arginine 293 contributes to the substrate binding site. Residues aspartate 294, glycine 298, and aspartate 324 each contribute to the Ca(2+) site. Residue asparagine 365 is glycosylated (N-linked (GlcNAc...) asparagine; by host). Position 368 (arginine 368) interacts with substrate. The active-site Nucleophile is the tyrosine 402. A glycan (N-linked (GlcNAc...) asparagine; by host) is linked at asparagine 455.

This sequence belongs to the glycosyl hydrolase 34 family. In terms of assembly, homotetramer. Requires Ca(2+) as cofactor. In terms of processing, N-glycosylated.

The protein localises to the virion membrane. It is found in the host apical cell membrane. The enzyme catalyses Hydrolysis of alpha-(2-&gt;3)-, alpha-(2-&gt;6)-, alpha-(2-&gt;8)- glycosidic linkages of terminal sialic acid residues in oligosaccharides, glycoproteins, glycolipids, colominic acid and synthetic substrates.. Inhibited by the neuraminidase inhibitors zanamivir (Relenza) and oseltamivir (Tamiflu). These drugs interfere with the release of progeny virus from infected cells and are effective against all influenza strains. Resistance to neuraminidase inhibitors is quite rare. Its function is as follows. Catalyzes the removal of terminal sialic acid residues from viral and cellular glycoconjugates. Cleaves off the terminal sialic acids on the glycosylated HA during virus budding to facilitate virus release. Additionally helps virus spread through the circulation by further removing sialic acids from the cell surface. These cleavages prevent self-aggregation and ensure the efficient spread of the progeny virus from cell to cell. Otherwise, infection would be limited to one round of replication. Described as a receptor-destroying enzyme because it cleaves a terminal sialic acid from the cellular receptors. May facilitate viral invasion of the upper airways by cleaving the sialic acid moieties on the mucin of the airway epithelial cells. Likely to plays a role in the budding process through its association with lipid rafts during intracellular transport. May additionally display a raft-association independent effect on budding. Plays a role in the determination of host range restriction on replication and virulence. Sialidase activity in late endosome/lysosome traffic seems to enhance virus replication. The polypeptide is Neuraminidase (Aves (Human)).